A 413-amino-acid polypeptide reads, in one-letter code: Multidrug resistance protein MdtA (413 aa).

An N-terminal signal peptide occupies residues 1–20; sequence MKGSNTFRWAIAIGVVVAAA. Disordered regions lie at residues 31–57 and 392–413; these read SPTA…RDGP and PQTT…GARA. Basic and acidic residues predominate over residues 397–413; that stretch reads ADEKSPSRHEGQKGARA.

This sequence belongs to the membrane fusion protein (MFP) (TC 8.A.1) family. In terms of assembly, part of a tripartite efflux system composed of MdtA, MdtB and MdtC.

The protein resides in the cell inner membrane. The chain is Multidrug resistance protein MdtA from Salmonella heidelberg (strain SL476).